We begin with the raw amino-acid sequence, 276 residues long: E3 ubiquitin-protein ligase CCNB1IP1 (276 aa).

An RING-type; atypical zinc finger spans residues 10–52 (CNYRKCRIKLSGYAWVTACSHIFCDQHGSGEFSRSPAICPACN). A coiled-coil region spans residues 146 to 182 (MKKVLEEYKKKFSDISEKLMERNRQYQKLQGLYDSLR).

Interacts with CCNB1, UBE2L3 and NF2. Post-translationally, ubiquitinated; autoubiquitinated. Phosphorylated by CDK1 on serine or threonine residues (in vitro). As to expression, expressed predominantly in the testes and 17 day embryos (corresponding to prophase I in females). Weakly or not expressed in other tissues.

The protein localises to the nucleus. It is found in the chromosome. The catalysed reaction is S-ubiquitinyl-[E2 ubiquitin-conjugating enzyme]-L-cysteine + [acceptor protein]-L-lysine = [E2 ubiquitin-conjugating enzyme]-L-cysteine + N(6)-ubiquitinyl-[acceptor protein]-L-lysine.. It functions in the pathway protein modification; protein ubiquitination. In terms of biological role, ubiquitin E3 ligase that acts as a limiting factor for crossing-over during meiosis: required during zygonema to limit the colocalization of RNF212 with MutS-gamma-associated recombination sites and thereby establish early differentiation of crossover and non-crossover sites. Later, it is directed by MutL-gamma to stably accumulate at designated crossover sites. Probably promotes the dissociation of RNF212 and MutS-gamma to allow the progression of recombination and the implementation of the final steps of crossing over. Modulates cyclin-B levels and participates in the regulation of cell cycle progression through the G2 phase. Overexpression causes delayed entry into mitosis. This is E3 ubiquitin-protein ligase CCNB1IP1 (Ccnb1ip1) from Mus musculus (Mouse).